A 401-amino-acid chain; its full sequence is Probable tRNA sulfurtransferase (401 aa).

The THUMP domain occupies 60–165 (EPIIEKLKTV…QDGTYVTCRD (106 aa)). ATP-binding positions include 183 to 184 (ML), 208 to 209 (HF), Arg265, Gly287, and Gln296.

The protein belongs to the ThiI family.

It localises to the cytoplasm. It catalyses the reaction [ThiI sulfur-carrier protein]-S-sulfanyl-L-cysteine + a uridine in tRNA + 2 reduced [2Fe-2S]-[ferredoxin] + ATP + H(+) = [ThiI sulfur-carrier protein]-L-cysteine + a 4-thiouridine in tRNA + 2 oxidized [2Fe-2S]-[ferredoxin] + AMP + diphosphate. It carries out the reaction [ThiS sulfur-carrier protein]-C-terminal Gly-Gly-AMP + S-sulfanyl-L-cysteinyl-[cysteine desulfurase] + AH2 = [ThiS sulfur-carrier protein]-C-terminal-Gly-aminoethanethioate + L-cysteinyl-[cysteine desulfurase] + A + AMP + 2 H(+). It participates in cofactor biosynthesis; thiamine diphosphate biosynthesis. Functionally, catalyzes the ATP-dependent transfer of a sulfur to tRNA to produce 4-thiouridine in position 8 of tRNAs, which functions as a near-UV photosensor. Also catalyzes the transfer of sulfur to the sulfur carrier protein ThiS, forming ThiS-thiocarboxylate. This is a step in the synthesis of thiazole, in the thiamine biosynthesis pathway. The sulfur is donated as persulfide by IscS. The polypeptide is Probable tRNA sulfurtransferase (Geobacillus kaustophilus (strain HTA426)).